A 453-amino-acid chain; its full sequence is Pup--protein ligase (453 aa).

Glu-9 is a binding site for Mg(2+). An ATP-binding site is contributed by Arg-53. Tyr-55 contributes to the Mg(2+) binding site. Residue Asp-57 is the Proton acceptor of the active site. Glu-63 lines the Mg(2+) pocket. Thr-66 and Trp-420 together coordinate ATP.

It belongs to the Pup ligase/Pup deamidase family. Pup-conjugating enzyme subfamily.

It catalyses the reaction ATP + [prokaryotic ubiquitin-like protein]-L-glutamate + [protein]-L-lysine = ADP + phosphate + N(6)-([prokaryotic ubiquitin-like protein]-gamma-L-glutamyl)-[protein]-L-lysine.. Its pathway is protein degradation; proteasomal Pup-dependent pathway. The protein operates within protein modification; protein pupylation. Functionally, catalyzes the covalent attachment of the prokaryotic ubiquitin-like protein modifier Pup to the proteasomal substrate proteins, thereby targeting them for proteasomal degradation. This tagging system is termed pupylation. The ligation reaction involves the side-chain carboxylate of the C-terminal glutamate of Pup and the side-chain amino group of a substrate lysine. The chain is Pup--protein ligase from Nocardioides sp. (strain ATCC BAA-499 / JS614).